The sequence spans 724 residues: WW domain-containing protein ZK1098.1 (724 aa).

2 WW domains span residues 78-111 (PSVESDWSVHTNEKGTPYYHNRVTKQTSWIKPDV) and 123-156 (QPQQGQWKEFMSDDGKPYYYNTLTKKTQWVKPDG). 6 consecutive FF domains span residues 224–282 (KKRQ…WKVQ), 295–349 (IKKS…CIDF), 353–422 (RDKE…HIKQ), 442–502 (QRKV…FVED), 507–562 (YTED…LIEK), and 578–632 (KRRL…YKNG). Residues 626 to 724 (FNHYKNGTSG…KRKRRESEAD (99 aa)) are disordered. The segment covering 630-639 (KNGTSGTTAG) has biased composition (polar residues). The span at 645–657 (KKKKKKDKKKKNK) shows a compositional bias: basic residues. A compositionally biased stretch (basic and acidic residues) spans 681–692 (SKEDRMDDEERG). The segment covering 693–703 (KKSKKSRKRSP) has biased composition (basic residues).

This Caenorhabditis elegans protein is WW domain-containing protein ZK1098.1.